Reading from the N-terminus, the 459-residue chain is MLDFMEYIQLGFAEATNWNRDNSYSSLTATAQSLLDFKTPERLRVHLSSLSTPHFATSYTLGTVGLIDGSVSYLYSTVPFDHTPSRSALIPLRKLAPGYRQVQPPVAPIENWGWDSTLNHETTPLAQKATLLHATMHMPPPTTLNALFLRRISPTMQLTLAVCSTRGPPLSKSAPQASLLTQLSHDTGKYSNEYLFSTDNALFGWRGLWNFGPDPRNPADDAAPRLSLLSAGAEAYYSPVSSLVGMSTGLRFSTLPAATDASSAPSSSSSPSSATPTQISTFPYTLTLTLTPMTGSLSTTYSLRASPNLSFSSRFGFNVYSWESEMVAGCELWRQSRKRVPAEEEDDGLEWARRKLRMMDDAAVPLPPTSSVPAEPEQDETTESVLKIRVDQSWNVRLLWEGRVKELLVSAGVGLGPSSFSSSAWTNSTAGGAGGQASGGGNAGTSYWRGVGVSVSYSS.

This sequence belongs to the MDM10 family. In terms of assembly, component of the ER-mitochondria encounter structure (ERMES) or MDM complex, composed of mmm1, mdm10, mdm12 and mdm34. Associates with the mitochondrial outer membrane sorting assembly machinery SAM(core) complex.

It is found in the mitochondrion outer membrane. In terms of biological role, component of the ERMES/MDM complex, which serves as a molecular tether to connect the endoplasmic reticulum and mitochondria. Components of this complex are involved in the control of mitochondrial shape and protein biogenesis and may function in phospholipid exchange. mdm10 is involved in the late assembly steps of the general translocase of the mitochondrial outer membrane (TOM complex). Functions in the tom40-specific route of the assembly of outer membrane beta-barrel proteins, including the association of tom40 with the receptor tom22 and small TOM proteins. Can associate with the SAM(core) complex as well as the mdm12-mmm1 complex, both involved in late steps of the major beta-barrel assembly pathway, that is responsible for biogenesis of all outer membrane beta-barrel proteins. May act as a switch that shuttles between both complexes and channels precursor proteins into the tom40-specific pathway. Plays a role in mitochondrial morphology and in the inheritance of mitochondria. This Aspergillus terreus (strain NIH 2624 / FGSC A1156) protein is Mitochondrial distribution and morphology protein 10 (mdmB).